Here is a 239-residue protein sequence, read N- to C-terminus: Probable transcriptional regulatory protein Bcer98_0465 (239 aa).

This sequence belongs to the TACO1 family. YeeN subfamily.

The protein localises to the cytoplasm. This chain is Probable transcriptional regulatory protein Bcer98_0465, found in Bacillus cytotoxicus (strain DSM 22905 / CIP 110041 / 391-98 / NVH 391-98).